Reading from the N-terminus, the 155-residue chain is Peptidyl-prolyl cis-trans isomerase ppi1 (155 aa).

In terms of domain architecture, PPIase cyclophilin-type spans 1–154 (MANVELQTSL…EPLKIIKAVA (154 aa)).

Belongs to the cyclophilin-type PPIase family. PPIL1 subfamily. As to quaternary structure, interacts with cwf13/snw1.

It catalyses the reaction [protein]-peptidylproline (omega=180) = [protein]-peptidylproline (omega=0). Its function is as follows. PPIases accelerate the folding of proteins. It catalyzes the cis-trans isomerization of proline imidic peptide bonds in oligopeptides. This chain is Peptidyl-prolyl cis-trans isomerase ppi1 (ppi1), found in Schizosaccharomyces pombe (strain 972 / ATCC 24843) (Fission yeast).